The chain runs to 149 residues: Large ribosomal subunit protein bL9 (149 aa).

It belongs to the bacterial ribosomal protein bL9 family.

Functionally, binds to the 23S rRNA. In Fusobacterium nucleatum subsp. nucleatum (strain ATCC 25586 / DSM 15643 / BCRC 10681 / CIP 101130 / JCM 8532 / KCTC 2640 / LMG 13131 / VPI 4355), this protein is Large ribosomal subunit protein bL9.